Consider the following 198-residue polypeptide: Probable nicotinate-nucleotide adenylyltransferase (198 aa).

The protein belongs to the NadD family.

It catalyses the reaction nicotinate beta-D-ribonucleotide + ATP + H(+) = deamido-NAD(+) + diphosphate. The protein operates within cofactor biosynthesis; NAD(+) biosynthesis; deamido-NAD(+) from nicotinate D-ribonucleotide: step 1/1. Its function is as follows. Catalyzes the reversible adenylation of nicotinate mononucleotide (NaMN) to nicotinic acid adenine dinucleotide (NaAD). This Chlorobium phaeobacteroides (strain BS1) protein is Probable nicotinate-nucleotide adenylyltransferase.